The primary structure comprises 595 residues: ATPase family AAA domain-containing protein 3 (595 aa).

Residues 1 to 48 (MSWLFGVQKNATPQIPDDFQAGAAPGGPQQPGQGQRQEGNSKMAYSFD) form a disordered region. Topologically, residues 1–243 (MSWLFGVQKN…LNQFLNDKTK (243 aa)) are mitochondrial intermembrane. Residues 20–35 (QAGAAPGGPQQPGQGQ) show a composition bias toward low complexity. Coiled-coil stretches lie at residues 80–107 (VTRQ…HIRV) and 140–175 (EELA…EHEL). The helical transmembrane segment at 244–260 (IAAAVGGLTALAVGWYT) threads the bilayer. The Mitochondrial matrix portion of the chain corresponds to 261–595 (AKRGTGVTAR…GTTLKRETAV (335 aa)). 349–356 (GPPGTGKT) is an ATP binding site. A PDZ-binding motif is present at residues 592 to 595 (ETAV).

The protein belongs to the AAA ATPase family.

The protein localises to the mitochondrion inner membrane. The protein resides in the mitochondrion matrix. It localises to the mitochondrion nucleoid. Essential for mitochondrial network organization, mitochondrial metabolism and cell growth at organism and cellular level. Important during development for the up-regulation of mitochondrial activity during the transition to higher larval stages. Regulates mitochondrial iron homeostasis. May play an important role in mitochondrial protein synthesis. May also participate in mitochondrial DNA replication. May bind to mitochondrial DNA D-loops and contribute to nucleoid stability. Plays a role in regulating the production of reactive oxygen species in response to heat stress. This Caenorhabditis elegans protein is ATPase family AAA domain-containing protein 3.